Reading from the N-terminus, the 511-residue chain is Histidine ammonia-lyase (511 aa).

The segment at residues 142–144 (ASG) is a cross-link (5-imidazolinone (Ala-Gly)). A 2,3-didehydroalanine (Ser) modification is found at serine 143.

It belongs to the PAL/histidase family. Contains an active site 4-methylidene-imidazol-5-one (MIO), which is formed autocatalytically by cyclization and dehydration of residues Ala-Ser-Gly.

The protein resides in the cytoplasm. It carries out the reaction L-histidine = trans-urocanate + NH4(+). It participates in amino-acid degradation; L-histidine degradation into L-glutamate; N-formimidoyl-L-glutamate from L-histidine: step 1/3. The sequence is that of Histidine ammonia-lyase from Brucella suis (strain ATCC 23445 / NCTC 10510).